A 450-amino-acid chain; its full sequence is CBL-interacting protein kinase 23 (450 aa).

A Protein kinase domain is found at 13 to 268 (YELGRTLGEG…IAELINNEWF (256 aa)). Residues 19 to 27 (LGEGTFAKV) and lysine 42 contribute to the ATP site. Aspartate 136 acts as the Proton acceptor in catalysis. Residues 154–183 (DFGLSALSQQVREDGLLHTTCGTPNYVAPE) form an activation loop region. An NAF domain is found at 306–331 (EERPSVMNAFELISTSQGLNLGTLFE). Residues 339 to 368 (KRETRFASRLPANEILSKIEAAAGPMGFNV) are PPI.

The protein belongs to the protein kinase superfamily. CAMK Ser/Thr protein kinase family. SNF1 subfamily. Mn(2+) is required as a cofactor.

The enzyme catalyses L-seryl-[protein] + ATP = O-phospho-L-seryl-[protein] + ADP + H(+). The catalysed reaction is L-threonyl-[protein] + ATP = O-phospho-L-threonyl-[protein] + ADP + H(+). Its function is as follows. CIPK serine-threonine protein kinases interact with CBL proteins. Binding of a CBL protein to the regulatory NAF domain of CIPK protein lead to the activation of the kinase in a calcium-dependent manner. This is CBL-interacting protein kinase 23 (CIPK23) from Oryza sativa subsp. japonica (Rice).